Reading from the N-terminus, the 243-residue chain is 1-(5-phosphoribosyl)-5-[(5-phosphoribosylamino)methylideneamino] imidazole-4-carboxamide isomerase (243 aa).

Asp-10 (proton acceptor) is an active-site residue. The Proton donor role is filled by Asp-129.

The protein belongs to the HisA/HisF family.

The protein resides in the cytoplasm. It carries out the reaction 1-(5-phospho-beta-D-ribosyl)-5-[(5-phospho-beta-D-ribosylamino)methylideneamino]imidazole-4-carboxamide = 5-[(5-phospho-1-deoxy-D-ribulos-1-ylimino)methylamino]-1-(5-phospho-beta-D-ribosyl)imidazole-4-carboxamide. It participates in amino-acid biosynthesis; L-histidine biosynthesis; L-histidine from 5-phospho-alpha-D-ribose 1-diphosphate: step 4/9. The sequence is that of 1-(5-phosphoribosyl)-5-[(5-phosphoribosylamino)methylideneamino] imidazole-4-carboxamide isomerase from Saccharopolyspora erythraea (strain ATCC 11635 / DSM 40517 / JCM 4748 / NBRC 13426 / NCIMB 8594 / NRRL 2338).